The following is a 274-amino-acid chain: Small nuclear ribonucleoprotein-associated protein B (274 aa).

A Sm domain is found at P5–P85. A disordered region spans residues P148 to K274. Repeat 1 spans residues P162 to P171. A 6 X 10 AA repeats of P-P-Q-G-F-P-P-G-G-P region spans residues P162–P265. Residues P173–G187 show a composition bias toward low complexity. 5 consecutive repeat copies span residues P188–P197, P204–P213, P225–P234, P241–P250, and P256–P265. Residues G216–P226 are compositionally biased toward low complexity. The span at P265 to K274 shows a compositional bias: gly residues.

The protein belongs to the snRNP SmB/SmN family.

The protein resides in the cytoplasm. The protein localises to the cytosol. It is found in the nucleus. Functionally, plays a role in pre-mRNA splicing as a core component of the spliceosomal U1, U2, U4 and U5 small nuclear ribonucleoproteins (snRNPs), the building blocks of the spliceosome. The sequence is that of Small nuclear ribonucleoprotein-associated protein B (snrpb) from Dictyostelium discoideum (Social amoeba).